A 238-amino-acid chain; its full sequence is Urease accessory protein UreF (238 aa).

This sequence belongs to the UreF family. As to quaternary structure, ureD, UreF and UreG form a complex that acts as a GTP-hydrolysis-dependent molecular chaperone, activating the urease apoprotein by helping to assemble the nickel containing metallocenter of UreC. The UreE protein probably delivers the nickel.

It is found in the cytoplasm. Required for maturation of urease via the functional incorporation of the urease nickel metallocenter. The protein is Urease accessory protein UreF of Rhodopseudomonas palustris (strain BisA53).